The chain runs to 448 residues: Probable glycine dehydrogenase (decarboxylating) subunit 1 (448 aa).

Belongs to the GcvP family. N-terminal subunit subfamily. As to quaternary structure, the glycine cleavage system is composed of four proteins: P, T, L and H. In this organism, the P 'protein' is a heterodimer of two subunits.

It carries out the reaction N(6)-[(R)-lipoyl]-L-lysyl-[glycine-cleavage complex H protein] + glycine + H(+) = N(6)-[(R)-S(8)-aminomethyldihydrolipoyl]-L-lysyl-[glycine-cleavage complex H protein] + CO2. Its function is as follows. The glycine cleavage system catalyzes the degradation of glycine. The P protein binds the alpha-amino group of glycine through its pyridoxal phosphate cofactor; CO(2) is released and the remaining methylamine moiety is then transferred to the lipoamide cofactor of the H protein. This chain is Probable glycine dehydrogenase (decarboxylating) subunit 1, found in Bacillus pumilus (strain SAFR-032).